The primary structure comprises 449 residues: Integrator complex subunit 15 (449 aa).

Belongs to the Integrator subunit 15 family. In terms of assembly, component of the Integrator complex, composed of core subunits INTS1, INTS2, INTS3, INTS4, INTS5, INTS6, INTS7, INTS8, INTS9/RC74, INTS10, INTS11/CPSF3L, INTS12, INTS13, INTS14 and INTS15. The core complex associates with protein phosphatase 2A subunits PPP2CA and PPP2R1A, to form the Integrator-PP2A (INTAC) complex. INTS15 is part of the tail subcomplex, composed of INTS10, INTS13, INTS14 and INTS15.

It is found in the nucleus. It localises to the chromosome. Functionally, component of the integrator complex, a multiprotein complex that terminates RNA polymerase II (Pol II) transcription in the promoter-proximal region of genes. The integrator complex provides a quality checkpoint during transcription elongation by driving premature transcription termination of transcripts that are unfavorably configured for transcriptional elongation: the complex terminates transcription by (1) catalyzing dephosphorylation of the C-terminal domain (CTD) of Pol II subunit POLR2A/RPB1 and SUPT5H/SPT5, (2) degrading the exiting nascent RNA transcript via endonuclease activity and (3) promoting the release of Pol II from bound DNA. The integrator complex is also involved in terminating the synthesis of non-coding Pol II transcripts, such as enhancer RNAs (eRNAs), small nuclear RNAs (snRNAs), telomerase RNAs and long non-coding RNAs (lncRNAs). INTS15 is part of the integrator tail module that acts as a platform for the recruitment of transcription factors at promoters. Within the integrator complex, INTS15 is required to bridge different integrator modules. The chain is Integrator complex subunit 15 from Homo sapiens (Human).